The primary structure comprises 315 residues: Glucokinase-like protein CC_3167 (315 aa).

The protein belongs to the bacterial glucokinase family.

The protein is Glucokinase-like protein CC_3167 of Caulobacter vibrioides (strain ATCC 19089 / CIP 103742 / CB 15) (Caulobacter crescentus).